Consider the following 1611-residue polypeptide: MAAAAASALGASAPKALAPADGPIVAGLDKLVNLEGVHDLFEAMRGAYGEDPAWKGLMSCDVVYLKDITTAIGVKDTSVGIFRKFSDGCSWCPTGAECFLSMKDLAYMKAQSAKAQRLTASLATTSNLIARAMRAESELKRARDEERKVDARYKDILEHSLAARKALQKELDETRERELHLLKELGKRSSIRTKAFSFFDWLFMAVVFFLFLHYTSAECVKPDFGCLVVNSNLPVPSLTFHDVMARCYNTFGNIVLSSQIDAARLREECEQSANKFLGTHIGDPAHKVWCENRLETLIPVECDSSEFLEIFTSNLNAFMVSVSQFYKTISYYKLDALVTFAFSAALATNKLKMVMVLPLLLVALYLNVPPITVTIASVIFQPLILPFVGFQLVFPNFLPYNLFVAWVWMVCQAFFSSDGVKLLVSVSTALVQVVFLAVWSISVIVLQQLSIPMVAQILLFVATLTVSVGVKFANSTITVVHPDGNTEKVSRVTLVRQSMAKRISQIKQSLTIRGVIPSGPNRFDSIVVVEGQGGSGVGWRFMNSIFTAGHVVQGSKFVTIKSESTQVKVKVKRVIDLFECVDTLVEIPLTKEFQHIKPLRLAKKVEDSYLQLCAFKPDMVEKASYQGWCTIDSGFIFNSFNTQFGNSGAPYVDSDGRLVGMHLGSQGVISQGVVLVDTLKTQFLAQQSQIDDQLMERIIEGTKVSHAAILTELDRMRTKVEEVALVSARVNQLESQLKDLYEFSSNSIKCLSDDIEKMVCAQLFDEINLQSVMEKISALPPTEKLAKLVEVFVEQKKKGKTKRTARGGKHALGKKYLSKAHFSRMRMLTEEEYNKMVEDGFSPDEIKEVVDQLREQAWQNYLIDNDIGEDDDLDWYDDMLEDERLNEEIDRRVEAALEDRGELAYQKIRRTFVDQALIHLITLKKGNWQTTKVECQPEREEAYKEQFQKAVKQEDLTEGTSYAIYSAGDATILIENKEIDHTEIKPVTTGAKTVQEYPKDARTTVATFDDNKKDIVKTKRTTEIVLEQRKKTCRTCGETRPHNHKMCRDRHTRRFCFWCGVVHSDVEGHSRDLKCPKCSAGFANLREMEQHAVTTCSKKLDSHPEPSRVFQPLDFGLGIFDWRFDLQPIRHHVAVPMNVEVLGYIPVDRLVERRNVITDPLLKLVEPWRQETYGPAVWTIKAYNKMFEKFFYSEPLEFAQLDSSILNLADSYCLQEHDYMSGSQIVPITSTEKNLDSTPGYPKFKVFSTEREYLSTCGWDEYKTVWQVGPREKPLWWCFLKTEVLKLAKIEQDDIRMILCTDPVFTRIGAAFEQHQNSLMKLETENHHAQVGWSPFFGGIHRRATRLYGEHRYYVELDWTRFDGTIPPELFRRIKLMRFFLLDPKYKTPENRDRYNWYVENLIDKVVLLPTGEVCKIYGGNPSGQFSTTVDNNFVNVWLTVFELAYLFYKEHNRLPTICEIKKHTDWICYGDDRLLAVDKRFINSYDTAAVIAMYKDVFGMWVKPDNIKVFPSLEGVSFCGMVWTKRKGQYVGKPNVDKILSTLSDPVSRLPDIQSLWGKLVSLRLLCENESDEVVDYLDKQIESVSRHAKEAGIALPKIGPDFYAEIWID.

Positions 124–187 (TTSNLIARAM…ELHLLKELGK (64 aa)) form a coiled coil. Helical transmembrane passes span 195–215 (AFSF…LHYT), 329–348 (ISYY…ALAT), 353–373 (MVMV…PITV), 375–395 (IASV…LVFP), 397–417 (FLPY…FFSS), 426–446 (VSTA…VIVL), and 450–470 (SIPM…SVGV). Catalysis depends on charge relay system; for serine protease activity residues histidine 550, aspartate 582, and serine 647. Position 833 is an O-(5'-phospho-RNA)-tyrosine (tyrosine 833). The region spanning 1352–1486 (RYYVELDWTR…AVDKRFINSY (135 aa)) is the RdRp catalytic domain.

This sequence belongs to the astroviridae polyprotein 1AB family. Monomer. In terms of processing, cleaved by the viral and host proteases. The protease is probably autocatalytically cleaved.

Its subcellular location is the host membrane. It catalyses the reaction RNA(n) + a ribonucleoside 5'-triphosphate = RNA(n+1) + diphosphate. Responsible for the cleavage of the polyprotein into functional products. Its function is as follows. Protein covalently attached to the 5' extremity of the genomic and subgenomic RNAs. It may serve as a primer for the replicase. The sequence is that of Non-structural polyprotein 1AB (ORF1) from Turkey astrovirus 1 (TAstV-1).